The sequence spans 1025 residues: Leucyl-cystinyl aminopeptidase (1025 aa).

Met1 carries the N-acetylmethionine modification. The Cytoplasmic portion of the chain corresponds to 1-109; it reads MESFTNDRLQ…DGTCSLPSAR (109 aa). The short motif at 53–54 is the Dileucine internalization motif element; that stretch reads LL. A Phosphotyrosine modification is found at Tyr70. The short motif at 76-77 is the Dileucine internalization motif element; the sequence is LL. Phosphoserine is present on residues Ser80 and Ser91. Positions 96-101 are tankyrase binding; sequence RQSPDG. A helical; Signal-anchor for type II membrane protein membrane pass occupies residues 110 to 131; it reads TLVICVFVIVVAVSVIMVIYLL. The Extracellular segment spans residues 132–1025; the sequence is PRCTFTKEGC…RNLKTLSQWL (894 aa). Asn145, Asn184, Asn215, Asn256, and Asn266 each carry an N-linked (GlcNAc...) asparagine glycan. Substrate is bound at residue Glu295. 2 N-linked (GlcNAc...) asparagine glycosylation sites follow: Asn368 and Asn374. 428–432 is a substrate binding site; the sequence is GAMEN. Residue Asn447 is glycosylated (N-linked (GlcNAc...) asparagine). Position 464 (His464) interacts with Zn(2+). Glu465 functions as the Proton acceptor in the catalytic mechanism. His468 and Glu487 together coordinate Zn(2+). Asn525, Asn578, Asn664, Asn682, Asn695, Asn758, Asn834, Asn850, and Asn989 each carry an N-linked (GlcNAc...) asparagine glycan.

It belongs to the peptidase M1 family. Homodimer. Binds tankyrases 1 and 2. It depends on Zn(2+) as a cofactor.

Its subcellular location is the cell membrane. It localises to the endomembrane system. It carries out the reaction Release of an N-terminal amino acid, Cys-|-Xaa-, in which the half-cystine residue is involved in a disulfide loop, notably in oxytocin or vasopressin. Hydrolysis rates on a range of aminoacyl arylamides exceed that for the cystinyl derivative, however.. Release of an N-terminal amino acid, cleave before cysteine, leucine as well as other amino acids. Degrades peptide hormones such as oxytocin, vasopressin and angiotensin III, and plays a role in maintaining homeostasis during pregnancy. May be involved in the inactivation of neuronal peptides in the brain. Cleaves Met-enkephalin and dynorphin. Binds angiotensin IV and may be the angiotensin IV receptor in the brain. The sequence is that of Leucyl-cystinyl aminopeptidase (Lnpep) from Mus musculus (Mouse).